The following is a 665-amino-acid chain: DNA ligase (665 aa).

Residues 32-36, 81-82, and Glu-110 each bind NAD(+); these read DSEYD and SL. Catalysis depends on Lys-112, which acts as the N6-AMP-lysine intermediate. Residues Arg-133, Glu-167, Lys-283, and Lys-307 each coordinate NAD(+). The Zn(2+) site is built by Cys-401, Cys-404, Cys-419, and Cys-424. Residues 586 to 665 enclose the BRCT domain; that stretch reads EGHPDFSGKT…AAFIEKQNGI (80 aa).

It belongs to the NAD-dependent DNA ligase family. LigA subfamily. The cofactor is Mg(2+). Requires Mn(2+) as cofactor.

It carries out the reaction NAD(+) + (deoxyribonucleotide)n-3'-hydroxyl + 5'-phospho-(deoxyribonucleotide)m = (deoxyribonucleotide)n+m + AMP + beta-nicotinamide D-nucleotide.. Its function is as follows. DNA ligase that catalyzes the formation of phosphodiester linkages between 5'-phosphoryl and 3'-hydroxyl groups in double-stranded DNA using NAD as a coenzyme and as the energy source for the reaction. It is essential for DNA replication and repair of damaged DNA. In Staphylococcus epidermidis (strain ATCC 12228 / FDA PCI 1200), this protein is DNA ligase.